Reading from the N-terminus, the 358-residue chain is Endo-1,4-beta-xylanase B (358 aa).

An N-terminal signal peptide occupies residues 1-17; the sequence is MRFSASLLLALTGSAAA. The GH10 domain maps to 40 to 352; the sequence is QGLDAAMKAA…KAAYNAFLRG (313 aa). The N-linked (GlcNAc...) asparagine glycan is linked to asparagine 136. Residue glutamate 166 is the Proton donor of the active site. Glutamate 274 acts as the Nucleophile in catalysis.

The protein belongs to the glycosyl hydrolase 10 (cellulase F) family.

It localises to the secreted. The enzyme catalyses Endohydrolysis of (1-&gt;4)-beta-D-xylosidic linkages in xylans.. It functions in the pathway glycan degradation; xylan degradation. With respect to regulation, partial inhibition of activity is detected in the presence of Ag(+), Cu2(+) and SDS. Like most fungal xylanases, activity is completely inhibited by Hg(2+) since Hg(2+) could interact with tryptophan residues and oxidize the indole ring. Beta-mercaptoethanol enhances the enzymatic activity by counteracting the oxidation effects of the S-S linkage between cysteine residues. Its function is as follows. Endo-1,4-beta-xylanase involved in the hydrolysis of xylan, a major structural heterogeneous polysaccharide found in plant biomass representing the second most abundant polysaccharide in the biosphere, after cellulose. Is more active on soluble wheat arabinoxylan (defined as 100%) than on birchwood xylan (75.4%) and beechwood xylan (70.8%), and less active on insoluble wheat arabinoxylan (17.4%). Xylose is the major hydrolysis product of XynB. In Humicola insolens (Soft-rot fungus), this protein is Endo-1,4-beta-xylanase B.